A 371-amino-acid chain; its full sequence is Aminomethyltransferase (371 aa).

It belongs to the GcvT family. In terms of assembly, the glycine cleavage system is composed of four proteins: P, T, L and H.

It carries out the reaction N(6)-[(R)-S(8)-aminomethyldihydrolipoyl]-L-lysyl-[protein] + (6S)-5,6,7,8-tetrahydrofolate = N(6)-[(R)-dihydrolipoyl]-L-lysyl-[protein] + (6R)-5,10-methylene-5,6,7,8-tetrahydrofolate + NH4(+). In terms of biological role, the glycine cleavage system catalyzes the degradation of glycine. The sequence is that of Aminomethyltransferase from Leptospira interrogans serogroup Icterohaemorrhagiae serovar Lai (strain 56601).